Reading from the N-terminus, the 223-residue chain is Ethylene-inducing xylanase 1 (223 aa).

Positions 1–19 (MVSFTSLLAAFSVVSGVLT) are cleaved as a signal peptide. The GH11 domain occupies 34 to 223 (KRTPSSTGTS…SSGSATMTVS (190 aa)). The Nucleophile role is filled by glutamate 119. Positions 174 to 184 (RRTKRTSGSVN) are nuclear localization signal. Glutamate 210 (proton donor) is an active-site residue.

Belongs to the glycosyl hydrolase 11 (cellulase G) family.

It localises to the secreted. The protein localises to the host nucleus. It catalyses the reaction Endohydrolysis of (1-&gt;4)-beta-D-xylosidic linkages in xylans.. It functions in the pathway glycan degradation; xylan degradation. Its function is as follows. Endo-1,4-beta-xylanase involved in the hydrolysis of xylan, a major structural heterogeneous polysaccharide found in plant biomass representing the second most abundant polysaccharide in the biosphere, after cellulose. Acts as an effector that localizes to the host nucleus to contribute to the virulence process. Induces host innate immunity responses; triggers BAK1-and SOBIR1-dependent cell death, salicylic acid signaling and jasmonic acid signaling. Does not exhibit any cell death when transiently expressed in N.benthamiana. In Verticillium dahliae (strain VdLs.17 / ATCC MYA-4575 / FGSC 10137) (Verticillium wilt), this protein is Ethylene-inducing xylanase 1.